Consider the following 308-residue polypeptide: MTSKSKILFIGGTGYIGKYIVEASARSGHPTLVLVRNSTLTSPSRSSTIENFKNLGVQFLLGDLDDHTSLVNSIKQADVVISTVGHSLLGHQYKIISAIKEAGNVKRFFPSEFGNDVDRVFTVEPAKSAYATKAKIRRTIEAEGIPYTYVSCNFFAGYFLPTLAQPGATSAPRDKVIVLGDGNPKAVFNKEEDIGTYTINAVDDPRTLNKILYIRPPMNTYSFNDLVSLWENKIGKTLERIYVPEEQLLKQIIESSPPLNVMLSLCHCVFVKGGHTSFEIEPSFGVEASELYPDVKYTTVDEILNQYV.

NADP(+) contacts are provided by residues 11 to 17, Arg-36, and Arg-45; that span reads GGTGYIG. Lys-133 acts as the Proton acceptor in catalysis. Arg-137 provides a ligand contact to NADP(+).

Belongs to the NmrA-type oxidoreductase family. Isoflavone reductase subfamily. Expressed in apical meristem and cotyledon veins of young seedlings. Expressed in vascular tissues of roots, leaves, stems and petals. Expressed in pollen grains. Expressed at low levels in cauline leaves and siliques.

It carries out the reaction (-)-dehydrodiconiferyl alcohol + NADPH + H(+) = (S)-isodihydrodehydrodiconiferyl alcohol + NADP(+). The catalysed reaction is (+)-dehydrodiconiferyl alcohol + NADPH + H(+) = (R)-isodihydrodehydrodiconiferyl alcohol + NADP(+). The enzyme catalyses (2R,3S)-dihydrodehydrodiconiferyl alcohol + NADPH + H(+) = (S)-tetrahydrodehydrodiconiferyl alcohol + NADP(+). It catalyses the reaction (2S,3R)-dihydrodehydrodiconiferyl alcohol + NADPH + H(+) = (R)-tetrahydrodehydrodiconiferyl alcohol + NADP(+). Oxidoreductase involved in lignan biosynthesis. Catalyzes the NADPH-dependent reduction of phenylcoumaran benzylic ethers. Converts dehydrodiconiferyl alcohol (DDC) to isodihydrodehydrodiconiferyl alcohol (IDDDC), and dihydrodehydrodiconiferyl alcohol (DDDC) to tetrahydrodehydrodiconiferyl alcohol (TDDC). Plays an important role in the biosynthesis of secondary metabolites. In addition to the 8-5'-linked neolignan DDC, can reduce the 8-8'-linked lignans, pinoresinol, and lariciresinol, but with lower activities. The polypeptide is Phenylcoumaran benzylic ether reductase 1 (Arabidopsis thaliana (Mouse-ear cress)).